We begin with the raw amino-acid sequence, 591 residues long: Aspartate--tRNA(Asp/Asn) ligase (591 aa).

E174 is an L-aspartate binding site. The aspartate stretch occupies residues 198–201 (QLFK). R220 is a binding site for L-aspartate. Residues 220-222 (RDE) and Q229 each bind ATP. H450 is a binding site for L-aspartate. E483 lines the ATP pocket. Position 490 (R490) interacts with L-aspartate. 535-538 (GLDR) contacts ATP.

It belongs to the class-II aminoacyl-tRNA synthetase family. Type 1 subfamily. As to quaternary structure, homodimer.

It is found in the cytoplasm. It catalyses the reaction tRNA(Asx) + L-aspartate + ATP = L-aspartyl-tRNA(Asx) + AMP + diphosphate. Its function is as follows. Aspartyl-tRNA synthetase with relaxed tRNA specificity since it is able to aspartylate not only its cognate tRNA(Asp) but also tRNA(Asn). Reaction proceeds in two steps: L-aspartate is first activated by ATP to form Asp-AMP and then transferred to the acceptor end of tRNA(Asp/Asn). In Pseudomonas fluorescens (strain Pf0-1), this protein is Aspartate--tRNA(Asp/Asn) ligase.